The chain runs to 360 residues: Methylthioribose-1-phosphate isomerase (360 aa).

Aspartate 252 acts as the Proton donor in catalysis.

This sequence belongs to the eIF-2B alpha/beta/delta subunits family. MtnA subfamily.

Its subcellular location is the cytoplasm. It is found in the nucleus. It carries out the reaction 5-(methylsulfanyl)-alpha-D-ribose 1-phosphate = 5-(methylsulfanyl)-D-ribulose 1-phosphate. The protein operates within amino-acid biosynthesis; L-methionine biosynthesis via salvage pathway; L-methionine from S-methyl-5-thio-alpha-D-ribose 1-phosphate: step 1/6. In terms of biological role, catalyzes the interconversion of methylthioribose-1-phosphate (MTR-1-P) into methylthioribulose-1-phosphate (MTRu-1-P). This is Methylthioribose-1-phosphate isomerase from Trichoplax adhaerens (Trichoplax reptans).